Reading from the N-terminus, the 391-residue chain is NAD(P)H-quinone oxidoreductase subunit H, chloroplastic (391 aa).

It belongs to the complex I 49 kDa subunit family. As to quaternary structure, NDH is composed of at least 16 different subunits, 5 of which are encoded in the nucleus.

It is found in the plastid. It localises to the chloroplast thylakoid membrane. The enzyme catalyses a plastoquinone + NADH + (n+1) H(+)(in) = a plastoquinol + NAD(+) + n H(+)(out). It catalyses the reaction a plastoquinone + NADPH + (n+1) H(+)(in) = a plastoquinol + NADP(+) + n H(+)(out). Its function is as follows. NDH shuttles electrons from NAD(P)H:plastoquinone, via FMN and iron-sulfur (Fe-S) centers, to quinones in the photosynthetic chain and possibly in a chloroplast respiratory chain. The immediate electron acceptor for the enzyme in this species is believed to be plastoquinone. Couples the redox reaction to proton translocation, and thus conserves the redox energy in a proton gradient. The chain is NAD(P)H-quinone oxidoreductase subunit H, chloroplastic from Chaetosphaeridium globosum (Charophycean green alga).